A 689-amino-acid polypeptide reads, in one-letter code: Glycine--tRNA ligase beta subunit (689 aa).

This sequence belongs to the class-II aminoacyl-tRNA synthetase family. As to quaternary structure, tetramer of two alpha and two beta subunits.

The protein localises to the cytoplasm. The catalysed reaction is tRNA(Gly) + glycine + ATP = glycyl-tRNA(Gly) + AMP + diphosphate. This chain is Glycine--tRNA ligase beta subunit, found in Shigella boydii serotype 18 (strain CDC 3083-94 / BS512).